The primary structure comprises 264 residues: Ribosomal RNA small subunit methyltransferase A (264 aa).

6 residues coordinate S-adenosyl-L-methionine: Asn-12, Leu-14, Gly-39, Glu-60, Asp-83, and Asn-103.

The protein belongs to the class I-like SAM-binding methyltransferase superfamily. rRNA adenine N(6)-methyltransferase family. RsmA subfamily.

The protein localises to the cytoplasm. The catalysed reaction is adenosine(1518)/adenosine(1519) in 16S rRNA + 4 S-adenosyl-L-methionine = N(6)-dimethyladenosine(1518)/N(6)-dimethyladenosine(1519) in 16S rRNA + 4 S-adenosyl-L-homocysteine + 4 H(+). In terms of biological role, specifically dimethylates two adjacent adenosines (A1518 and A1519) in the loop of a conserved hairpin near the 3'-end of 16S rRNA in the 30S particle. May play a critical role in biogenesis of 30S subunits. The protein is Ribosomal RNA small subunit methyltransferase A of Syntrophotalea carbinolica (strain DSM 2380 / NBRC 103641 / GraBd1) (Pelobacter carbinolicus).